The primary structure comprises 379 residues: MSTVFPVDSVGLVVPQTARFDEPLALACGRSLASYELVYETYGTLNASASNAVLICHALSGHHHAAGYHAATDRKPGWWDSCIGPGKPIDTNRFFVVSLNNLGGCNGSTGPSSVNPATGKPYGADFPVLTVEDWVHSQVRLGERLGIQQWAAVVGGSLGGMQALQWTISYPERVRHCVDIASAPKLSAQNIAFNEVARQAILTDPEFHGGSFQDQGVIPKRGLMLARMVGHITYLSDDSMGEKFGRELKSDKLNYDFHSVEFQVESYLRYQGEEFSGRFDANTYLLMTKALDYFDPAAAQGGDLAATLAHVTADYCIMSFTTDWRFSPARSREIVDALMAARKNVCYLEIDSPYGHDAFLIPTPRYMQGFSNYMNRIAI.

Residues 51-360 (NAVLICHALS…DSPYGHDAFL (310 aa)) enclose the AB hydrolase-1 domain. The active-site Nucleophile is S157. R227 is a binding site for substrate. Active-site residues include D323 and H356. Residue D357 coordinates substrate.

The protein belongs to the AB hydrolase superfamily. MetX family. Homodimer.

The protein resides in the cytoplasm. The enzyme catalyses L-homoserine + succinyl-CoA = O-succinyl-L-homoserine + CoA. The protein operates within amino-acid biosynthesis; L-methionine biosynthesis via de novo pathway; O-succinyl-L-homoserine from L-homoserine: step 1/1. Transfers a succinyl group from succinyl-CoA to L-homoserine, forming succinyl-L-homoserine. The protein is Homoserine O-succinyltransferase of Pseudomonas putida (strain GB-1).